The sequence spans 1181 residues: Clustered mitochondria protein homolog (1181 aa).

The segment at 165–195 (AKAEALAKNEEVSEDEESEPEDDTPMKQSTQ) is disordered. Positions 176–187 (VSEDEESEPEDD) are enriched in acidic residues. One can recognise a Clu domain in the interval 379 to 622 (DMARNQELLS…RLAPVDIAFL (244 aa)). Residues 1130–1181 (GRLARQAPKPTATHQKEAPKKASKKTKGKGKGKDDKGEKLVAELKKKKAGKR) form a disordered region. Positions 1150 to 1159 (KASKKTKGKG) are enriched in basic residues. Basic and acidic residues predominate over residues 1160 to 1173 (KGKDDKGEKLVAEL).

It belongs to the CLU family. As to quaternary structure, may associate with the eukaryotic translation initiation factor 3 (eIF-3) complex.

The protein resides in the cytoplasm. Functionally, mRNA-binding protein involved in proper cytoplasmic distribution of mitochondria. The sequence is that of Clustered mitochondria protein homolog from Yarrowia lipolytica (strain CLIB 122 / E 150) (Yeast).